We begin with the raw amino-acid sequence, 118 residues long: Large ribosomal subunit protein bL17 (118 aa).

The protein belongs to the bacterial ribosomal protein bL17 family. As to quaternary structure, part of the 50S ribosomal subunit. Contacts protein L32.

The sequence is that of Large ribosomal subunit protein bL17 from Gemmatimonas aurantiaca (strain DSM 14586 / JCM 11422 / NBRC 100505 / T-27).